The primary structure comprises 864 residues: Valine--tRNA ligase (864 aa).

The 'HIGH' region signature appears at 42-52 (PTISGKLHIGH). The 'KMSKS' region signature appears at 589 to 593 (KMSKS). ATP is bound at residue Lys-592.

The protein belongs to the class-I aminoacyl-tRNA synthetase family. ValS type 2 subfamily. In terms of assembly, monomer.

It is found in the cytoplasm. The catalysed reaction is tRNA(Val) + L-valine + ATP = L-valyl-tRNA(Val) + AMP + diphosphate. In terms of biological role, catalyzes the attachment of valine to tRNA(Val). As ValRS can inadvertently accommodate and process structurally similar amino acids such as threonine, to avoid such errors, it has a 'posttransfer' editing activity that hydrolyzes mischarged Thr-tRNA(Val) in a tRNA-dependent manner. The polypeptide is Valine--tRNA ligase (Wolbachia pipientis wMel).